Here is a 204-residue protein sequence, read N- to C-terminus: Thymidylate kinase (204 aa).

11–18 provides a ligand contact to ATP; it reads GLDKSGKT.

This sequence belongs to the thymidylate kinase family.

It carries out the reaction dTMP + ATP = dTDP + ADP. The protein operates within pyrimidine metabolism; dTTP biosynthesis. The sequence is that of Thymidylate kinase (TMK) from Camelus.